We begin with the raw amino-acid sequence, 198 residues long: Holliday junction branch migration complex subunit RuvA (198 aa).

Residues 1–63 (MYDYIKGQLT…EDAHLLFGFH (63 aa)) form a domain I region. A domain II region spans residues 64-142 (TEDEKDVFLK…EAPQETGNTK (79 aa)). The flexible linker stretch occupies residues 143–147 (ARSNK). The domain III stretch occupies residues 148 to 198 (AGNTQLDEAIEALLALGYKAAELKKIRAFFEGTSETAEQYIKSALKLLMKG).

This sequence belongs to the RuvA family. In terms of assembly, homotetramer. Forms an RuvA(8)-RuvB(12)-Holliday junction (HJ) complex. HJ DNA is sandwiched between 2 RuvA tetramers; dsDNA enters through RuvA and exits via RuvB. An RuvB hexamer assembles on each DNA strand where it exits the tetramer. Each RuvB hexamer is contacted by two RuvA subunits (via domain III) on 2 adjacent RuvB subunits; this complex drives branch migration. In the full resolvosome a probable DNA-RuvA(4)-RuvB(12)-RuvC(2) complex forms which resolves the HJ.

It localises to the cytoplasm. Functionally, the RuvA-RuvB-RuvC complex processes Holliday junction (HJ) DNA during genetic recombination and DNA repair, while the RuvA-RuvB complex plays an important role in the rescue of blocked DNA replication forks via replication fork reversal (RFR). RuvA specifically binds to HJ cruciform DNA, conferring on it an open structure. The RuvB hexamer acts as an ATP-dependent pump, pulling dsDNA into and through the RuvAB complex. HJ branch migration allows RuvC to scan DNA until it finds its consensus sequence, where it cleaves and resolves the cruciform DNA. The polypeptide is Holliday junction branch migration complex subunit RuvA (Streptococcus pyogenes serotype M28 (strain MGAS6180)).